The sequence spans 347 residues: UDP-N-acetylenolpyruvoylglucosamine reductase (347 aa).

An FAD-binding PCMH-type domain is found at 24–195; the sequence is FDARARVAAR…VAVTFRLPKA (172 aa). Residue R171 is part of the active site. The Proton donor role is filled by S247. The active site involves E343.

It belongs to the MurB family. Requires FAD as cofactor.

The protein resides in the cytoplasm. It carries out the reaction UDP-N-acetyl-alpha-D-muramate + NADP(+) = UDP-N-acetyl-3-O-(1-carboxyvinyl)-alpha-D-glucosamine + NADPH + H(+). It participates in cell wall biogenesis; peptidoglycan biosynthesis. Functionally, cell wall formation. The protein is UDP-N-acetylenolpyruvoylglucosamine reductase of Burkholderia pseudomallei (strain 668).